A 425-amino-acid polypeptide reads, in one-letter code: Serine--tRNA ligase (425 aa).

229 to 231 (TSE) is a binding site for L-serine. ATP contacts are provided by residues 259–261 (RKE) and V275. Residue E282 participates in L-serine binding. An ATP-binding site is contributed by 349–352 (EVTS). T384 lines the L-serine pocket.

It belongs to the class-II aminoacyl-tRNA synthetase family. Type-1 seryl-tRNA synthetase subfamily. Homodimer. The tRNA molecule binds across the dimer.

It is found in the cytoplasm. It carries out the reaction tRNA(Ser) + L-serine + ATP = L-seryl-tRNA(Ser) + AMP + diphosphate + H(+). The catalysed reaction is tRNA(Sec) + L-serine + ATP = L-seryl-tRNA(Sec) + AMP + diphosphate + H(+). It functions in the pathway aminoacyl-tRNA biosynthesis; selenocysteinyl-tRNA(Sec) biosynthesis; L-seryl-tRNA(Sec) from L-serine and tRNA(Sec): step 1/1. In terms of biological role, catalyzes the attachment of serine to tRNA(Ser). Is also able to aminoacylate tRNA(Sec) with serine, to form the misacylated tRNA L-seryl-tRNA(Sec), which will be further converted into selenocysteinyl-tRNA(Sec). The polypeptide is Serine--tRNA ligase (Borreliella burgdorferi (strain ATCC 35210 / DSM 4680 / CIP 102532 / B31) (Borrelia burgdorferi)).